We begin with the raw amino-acid sequence, 288 residues long: N(1)-aminopropylagmatine ureohydrolase (288 aa).

H114, D133, H135, D137, D213, and D215 together coordinate Mn(2+).

It belongs to the arginase family. The cofactor is Mn(2+).

The protein localises to the cytoplasm. The catalysed reaction is N(1)-(3-aminopropyl)agmatine + H2O = urea + spermidine. It catalyses the reaction agmatine + H2O = urea + putrescine. The protein operates within amine and polyamine biosynthesis; spermidine biosynthesis. In terms of biological role, involved in the biosynthesis of polyamines which are thought to support the growth of thermophilic microorganisms under high-temperature conditions. It seems that long-chain and branched-chain of polyamines effectively stabilize DNA and RNA, respectively. Catalyzes the decarboxylation of N1-(3-aminopropyl)agmatine to yield spermidine and urea. It can also use agmatine to yield putrescine. This Thermococcus kodakarensis (strain ATCC BAA-918 / JCM 12380 / KOD1) (Pyrococcus kodakaraensis (strain KOD1)) protein is N(1)-aminopropylagmatine ureohydrolase.